A 426-amino-acid chain; its full sequence is MLDLKRIRNNPEEIKKQLLNRGEDFELSIIDKVVSLDEKRRKILVEVEALKNKRNQDSGEIAKIKRAGGNADTLVVEMKQVSDNIKQYDIQLSEINDKIEYIMLRIPNIPNPAVPEGKLDEDNVEIRRWMEPTKFKFQPKAHWDIGTNLNILDFERGGKVAGSRFTFYRGLGARLERAIVSYYLDFHTEKHGYEEILPPYMVNRTSMIGTGQLPKFEEDAFRVANNDFFLIPTAEVPVTNFYRNEVLKGEDLPIKYVAYSACFRAEAGSAGRDTRGIIRQHQFNKVELVKFAKPEQSYDELEKLTNDAEDVIKGLKIPYRVVKICKGDLGFTAALKYDIEVWMPSYNRYVEISSCSNFEDFQARRVNIKYKETPKDKPKYIHTLNGSGVAIGRTVAAILENYQQDDGSVLIPEILKPYMGGREVIK.

233 to 235 contributes to the L-serine binding site; the sequence is TAE. 264 to 266 contributes to the ATP binding site; it reads RAE. Glutamate 287 is a binding site for L-serine. 351–354 contributes to the ATP binding site; the sequence is EISS. Serine 387 serves as a coordination point for L-serine.

This sequence belongs to the class-II aminoacyl-tRNA synthetase family. Type-1 seryl-tRNA synthetase subfamily. In terms of assembly, homodimer. The tRNA molecule binds across the dimer.

The protein resides in the cytoplasm. It carries out the reaction tRNA(Ser) + L-serine + ATP = L-seryl-tRNA(Ser) + AMP + diphosphate + H(+). The catalysed reaction is tRNA(Sec) + L-serine + ATP = L-seryl-tRNA(Sec) + AMP + diphosphate + H(+). The protein operates within aminoacyl-tRNA biosynthesis; selenocysteinyl-tRNA(Sec) biosynthesis; L-seryl-tRNA(Sec) from L-serine and tRNA(Sec): step 1/1. In terms of biological role, catalyzes the attachment of serine to tRNA(Ser). Is also able to aminoacylate tRNA(Sec) with serine, to form the misacylated tRNA L-seryl-tRNA(Sec), which will be further converted into selenocysteinyl-tRNA(Sec). The polypeptide is Serine--tRNA ligase (Clostridium kluyveri (strain NBRC 12016)).